The chain runs to 172 residues: Cytidylate kinase (172 aa).

ATP is bound at residue 7–15; it reads GLAGTGTTT.

The protein belongs to the cytidylate kinase family. Type 2 subfamily.

Its subcellular location is the cytoplasm. It catalyses the reaction CMP + ATP = CDP + ADP. The catalysed reaction is dCMP + ATP = dCDP + ADP. The protein is Cytidylate kinase of Methanobrevibacter smithii (strain ATCC 35061 / DSM 861 / OCM 144 / PS).